Reading from the N-terminus, the 135-residue chain is Transcription antitermination protein NusB (135 aa).

This sequence belongs to the NusB family.

Functionally, involved in transcription antitermination. Required for transcription of ribosomal RNA (rRNA) genes. Binds specifically to the boxA antiterminator sequence of the ribosomal RNA (rrn) operons. This chain is Transcription antitermination protein NusB, found in Bdellovibrio bacteriovorus (strain ATCC 15356 / DSM 50701 / NCIMB 9529 / HD100).